We begin with the raw amino-acid sequence, 92 residues long: Small ribosomal subunit protein uS19c (92 aa).

The protein belongs to the universal ribosomal protein uS19 family.

Its subcellular location is the plastid. It is found in the chloroplast. Protein S19 forms a complex with S13 that binds strongly to the 16S ribosomal RNA. This is Small ribosomal subunit protein uS19c from Manihot esculenta (Cassava).